We begin with the raw amino-acid sequence, 386 residues long: S-adenosylmethionine synthase (386 aa).

Position 16 (His-16) interacts with ATP. Residue Asp-18 participates in Mg(2+) binding. K(+) is bound at residue Glu-44. Glu-57 and Gln-100 together coordinate L-methionine. Positions 100–110 (QSRDITQGVDR) are flexible loop. ATP is bound by residues 165-167 (DAK), Asp-240, 246-247 (RK), Ala-263, and Lys-267. Asp-240 is a binding site for L-methionine. Lys-271 serves as a coordination point for L-methionine.

This sequence belongs to the AdoMet synthase family. In terms of assembly, homotetramer; dimer of dimers. It depends on Mg(2+) as a cofactor. The cofactor is K(+).

Its subcellular location is the cytoplasm. It catalyses the reaction L-methionine + ATP + H2O = S-adenosyl-L-methionine + phosphate + diphosphate. It functions in the pathway amino-acid biosynthesis; S-adenosyl-L-methionine biosynthesis; S-adenosyl-L-methionine from L-methionine: step 1/1. In terms of biological role, catalyzes the formation of S-adenosylmethionine (AdoMet) from methionine and ATP. The overall synthetic reaction is composed of two sequential steps, AdoMet formation and the subsequent tripolyphosphate hydrolysis which occurs prior to release of AdoMet from the enzyme. This chain is S-adenosylmethionine synthase, found in Francisella tularensis subsp. tularensis (strain WY96-3418).